Here is a 353-residue protein sequence, read N- to C-terminus: Rhodopsin (353 aa).

The Extracellular portion of the chain corresponds to 1 to 36 (MNGTEGPFFYVPMVNTTGIVRSPYEYPQYYLVNPAA). Residues asparagine 2 and asparagine 15 are each glycosylated (N-linked (GlcNAc...) asparagine). Residues 37–61 (YAALGAYMFLLILVGFPINFLTLYV) traverse the membrane as a helical segment. Over 62–73 (TIEHKKLRTPLN) the chain is Cytoplasmic. The helical transmembrane segment at 74-96 (YILLNLAVADLFMVLGGFTTTMY) threads the bilayer. Residues 97-110 (TSMHGYFVLGRLGC) are Extracellular-facing. The cysteines at positions 110 and 187 are disulfide-linked. A helical transmembrane segment spans residues 111 to 133 (NIEGFFATLGGEIALWSLVVLAI). Residues 134 to 136 (ERW) carry the 'Ionic lock' involved in activated form stabilization motif. The Cytoplasmic portion of the chain corresponds to 134 to 152 (ERWVVVCKPISNFRFGENH). The chain crosses the membrane as a helical span at residues 153–173 (AIMGLAFTWTMAMACAAPPLV). At 174 to 202 (GWSRYIPEGMQCSCGIDYYTRAEGFNNES) the chain is on the extracellular side. A glycan (N-linked (GlcNAc...) asparagine) is linked at asparagine 200. A helical transmembrane segment spans residues 203 to 224 (FVIYMFICHFTIPLTVVFFCYG). Residues 225-252 (RLLCAVKEAAAAQQESETTQRAEKEVTR) are Cytoplasmic-facing. The chain crosses the membrane as a helical span at residues 253 to 274 (MVIMMVIAFLVCWLPYASVAWY). The Extracellular portion of the chain corresponds to 275–286 (IFTHQGSEFGPV). Residues 287 to 308 (FMTIPAFFAKSSSIYNPMIYIC) traverse the membrane as a helical segment. Residue lysine 296 is modified to N6-(retinylidene)lysine. Topologically, residues 309–353 (LNKQFRHCMITTLCCGKNPFEEEEGASTASKTEASSVSSSSVSPA) are cytoplasmic. Residues cysteine 322 and cysteine 323 are each lipidated (S-palmitoyl cysteine). The tract at residues 331 to 353 (EEGASTASKTEASSVSSSSVSPA) is disordered. Over residues 334-353 (ASTASKTEASSVSSSSVSPA) the composition is skewed to low complexity.

This sequence belongs to the G-protein coupled receptor 1 family. Opsin subfamily. Post-translationally, phosphorylated on some or all of the serine and threonine residues present in the C-terminal region. In terms of processing, contains one covalently linked retinal chromophore.

Its subcellular location is the membrane. The protein localises to the cell projection. It localises to the cilium. The protein resides in the photoreceptor outer segment. Functionally, photoreceptor required for image-forming vision at low light intensity. While most salt water fish species use retinal as chromophore, most freshwater fish use 3-dehydroretinal, or a mixture of retinal and 3-dehydroretinal. Light-induced isomerization of 11-cis to all-trans retinal triggers a conformational change that activates signaling via G-proteins. Subsequent receptor phosphorylation mediates displacement of the bound G-protein alpha subunit by arrestin and terminates signaling. The polypeptide is Rhodopsin (rho) (Diplodus annularis (Annular seabream)).